Here is a 420-residue protein sequence, read N- to C-terminus: Serine hydroxymethyltransferase (420 aa).

Residues leucine 121 and 125-127 (GHL) contribute to the (6S)-5,6,7,8-tetrahydrofolate site. The residue at position 230 (lysine 230) is an N6-(pyridoxal phosphate)lysine. 355 to 357 (SPF) is a (6S)-5,6,7,8-tetrahydrofolate binding site.

This sequence belongs to the SHMT family. In terms of assembly, homodimer. The cofactor is pyridoxal 5'-phosphate.

The protein localises to the cytoplasm. The enzyme catalyses (6R)-5,10-methylene-5,6,7,8-tetrahydrofolate + glycine + H2O = (6S)-5,6,7,8-tetrahydrofolate + L-serine. It functions in the pathway one-carbon metabolism; tetrahydrofolate interconversion. It participates in amino-acid biosynthesis; glycine biosynthesis; glycine from L-serine: step 1/1. In terms of biological role, catalyzes the reversible interconversion of serine and glycine with tetrahydrofolate (THF) serving as the one-carbon carrier. This reaction serves as the major source of one-carbon groups required for the biosynthesis of purines, thymidylate, methionine, and other important biomolecules. Also exhibits THF-independent aldolase activity toward beta-hydroxyamino acids, producing glycine and aldehydes, via a retro-aldol mechanism. This Streptococcus gordonii (strain Challis / ATCC 35105 / BCRC 15272 / CH1 / DL1 / V288) protein is Serine hydroxymethyltransferase.